The following is a 529-amino-acid chain: Peptide chain release factor 3 (529 aa).

Residues 11 to 280 (AARRTFAIIS…GLVAWAPPPM (270 aa)) form the tr-type G domain. Residues 20–27 (SHPDAGKT), 88–92 (DTPGH), and 142–145 (NKVD) contribute to the GTP site.

Belongs to the TRAFAC class translation factor GTPase superfamily. Classic translation factor GTPase family. PrfC subfamily.

The protein localises to the cytoplasm. Its function is as follows. Increases the formation of ribosomal termination complexes and stimulates activities of RF-1 and RF-2. It binds guanine nucleotides and has strong preference for UGA stop codons. It may interact directly with the ribosome. The stimulation of RF-1 and RF-2 is significantly reduced by GTP and GDP, but not by GMP. This Sodalis glossinidius (strain morsitans) protein is Peptide chain release factor 3.